The primary structure comprises 428 residues: Cholecystokinin receptor type A (428 aa).

Over 1–41 the chain is Extracellular; it reads MEVADSLLGNGSDVPPPCELGLENETLVCLEQPRAAKEWQP. Asparagine 10 and asparagine 24 each carry an N-linked (GlcNAc...) asparagine glycan. A disulfide bond links cysteine 18 and cysteine 29. Residues 42–67 form a helical membrane-spanning segment; that stretch reads AVQILLYSLIFLLSVLGNTLVITVLI. Topologically, residues 68–77 are cytoplasmic; sequence RNKRMRTVTN. The chain crosses the membrane as a helical span at residues 78–104; that stretch reads IFLLSLAVSDLMLCLFCMPFNLIPNLL. At 105-115 the chain is on the extracellular side; that stretch reads KDFIFGSAVCK. A disulfide bridge connects residues cysteine 114 and cysteine 196. A helical membrane pass occupies residues 116–137; that stretch reads TTTYFMGTSVSVSTFNLVAISL. Residues 138–157 are Cytoplasmic-facing; that stretch reads ERYGAICKPLQSRVWQTKSH. The chain crosses the membrane as a helical span at residues 158–178; the sequence is ALKVIATTWCLSFTIMTPYPI. The Extracellular segment spans residues 179–210; the sequence is YSNLVPFTKTNNQTANMCRFLLPNDVMQQSWH. N-linked (GlcNAc...) asparagine glycosylation occurs at asparagine 190. The chain crosses the membrane as a helical span at residues 211–234; the sequence is TFLLLILFLIPGIVMMVAYGLISL. At 235–313 the chain is on the cytoplasmic side; it reads ELYQGIKFDA…NLMAKKRVIR (79 aa). The disordered stretch occupies residues 250–269; sequence ARDRNPSTGSSGRYEDGDGC. A helical transmembrane segment spans residues 314–334; that stretch reads MLMVIVVLFFLCWMPIFSANA. Residues 335–349 are Extracellular-facing; the sequence is WRAYDTASAERRLSG. The helical transmembrane segment at 350–373 threads the bilayer; sequence TPISFILLLSYTSSCVNPIIYCFM. At 374 to 428 the chain is on the cytoplasmic side; the sequence is NKRFRLGFLATFPCCPHPGPPGPRGEVGEEEEGRTTGASLSRYSYSHMSASAPGP. A lipid anchor (S-palmitoyl cysteine) is attached at cysteine 387. The disordered stretch occupies residues 393-428; that stretch reads PPGPRGEVGEEEEGRTTGASLSRYSYSHMSASAPGP. Residues 409 to 422 show a composition bias toward polar residues; the sequence is TGASLSRYSYSHMS.

It belongs to the G-protein coupled receptor 1 family.

The protein localises to the cell membrane. Functionally, receptor for cholecystokinin. Mediates pancreatic growth and enzyme secretion, smooth muscle contraction of the gall bladder and stomach. Has a 1000-fold higher affinity for CCK rather than for gastrin. It modulates feeding and dopamine-induced behavior in the central and peripheral nervous system. This receptor mediates its action by association with G proteins that activate a phosphatidylinositol-calcium second messenger system. The protein is Cholecystokinin receptor type A (CCKAR) of Canis lupus familiaris (Dog).